We begin with the raw amino-acid sequence, 188 residues long: CASP-like protein 4B3 (188 aa).

Residues 1–21 (MSFSPASSEPHDAPAAAGSSV) are disordered. Residues 1–42 (MSFSPASSEPHDAPAAAGSSVPASRSIAERWKMEAAPIRARL) lie on the Cytoplasmic side of the membrane. The chain crosses the membrane as a helical span at residues 43 to 63 (LLRAFAWLFSLLALVVMATDV). Residues 64 to 76 (HGRGGAQDFSTYP) are Extracellular-facing. The chain crosses the membrane as a helical span at residues 77–97 (EYNYCLGMSIIALLYATAQLV). The Cytoplasmic segment spans residues 98-114 (RDAHRLSSGRDLVAGRK). Residues 115–135 (AAAVVDFAGDQVVAYSLISGL) traverse the membrane as a helical segment. Residues 136–156 (SAAAPVTDYMRQATDNLFNDS) are Extracellular-facing. Asparagine 154 is a glycosylation site (N-linked (GlcNAc...) asparagine). A helical membrane pass occupies residues 157 to 177 (AAAAISLAFFAFLAISLSALI). Over 178–188 (SGYNLSLEAIV) the chain is Cytoplasmic.

This sequence belongs to the Casparian strip membrane proteins (CASP) family. In terms of assembly, homodimer and heterodimers.

The protein resides in the cell membrane. This chain is CASP-like protein 4B3, found in Hordeum vulgare subsp. vulgare (Domesticated barley).